Here is a 715-residue protein sequence, read N- to C-terminus: Fatty acid oxidation complex subunit alpha (715 aa).

The interval 1–190 (MIYEGKAITV…KVGAVDAVVA (190 aa)) is enoyl-CoA hydratase/isomerase. Aspartate 297 serves as a coordination point for substrate. A 3-hydroxyacyl-CoA dehydrogenase region spans residues 312–715 (HDVKQAAVLG…MAKNGQRFFN (404 aa)). Residues methionine 325, aspartate 344, 401 to 403 (VVE), lysine 408, and serine 430 contribute to the NAD(+) site. Histidine 451 functions as the For 3-hydroxyacyl-CoA dehydrogenase activity in the catalytic mechanism. Residue asparagine 454 participates in NAD(+) binding. Residues asparagine 501 and tyrosine 660 each contribute to the substrate site.

In the N-terminal section; belongs to the enoyl-CoA hydratase/isomerase family. This sequence in the C-terminal section; belongs to the 3-hydroxyacyl-CoA dehydrogenase family. In terms of assembly, heterotetramer of two alpha chains (FadB) and two beta chains (FadA).

It catalyses the reaction a (3S)-3-hydroxyacyl-CoA + NAD(+) = a 3-oxoacyl-CoA + NADH + H(+). It carries out the reaction a (3S)-3-hydroxyacyl-CoA = a (2E)-enoyl-CoA + H2O. The enzyme catalyses a 4-saturated-(3S)-3-hydroxyacyl-CoA = a (3E)-enoyl-CoA + H2O. The catalysed reaction is (3S)-3-hydroxybutanoyl-CoA = (3R)-3-hydroxybutanoyl-CoA. It catalyses the reaction a (3Z)-enoyl-CoA = a 4-saturated (2E)-enoyl-CoA. It carries out the reaction a (3E)-enoyl-CoA = a 4-saturated (2E)-enoyl-CoA. The protein operates within lipid metabolism; fatty acid beta-oxidation. In terms of biological role, involved in the aerobic and anaerobic degradation of long-chain fatty acids via beta-oxidation cycle. Catalyzes the formation of 3-oxoacyl-CoA from enoyl-CoA via L-3-hydroxyacyl-CoA. It can also use D-3-hydroxyacyl-CoA and cis-3-enoyl-CoA as substrate. This Pseudomonas putida (strain GB-1) protein is Fatty acid oxidation complex subunit alpha.